Consider the following 254-residue polypeptide: Small ribosomal subunit protein uS2 (254 aa).

The protein belongs to the universal ribosomal protein uS2 family.

This Brucella ovis (strain ATCC 25840 / 63/290 / NCTC 10512) protein is Small ribosomal subunit protein uS2.